Reading from the N-terminus, the 357-residue chain is Alanine racemase (357 aa).

K34 functions as the Proton acceptor; specific for D-alanine in the catalytic mechanism. The residue at position 34 (K34) is an N6-(pyridoxal phosphate)lysine. A substrate-binding site is contributed by R130. Catalysis depends on Y253, which acts as the Proton acceptor; specific for L-alanine. M301 is a substrate binding site.

Belongs to the alanine racemase family. The cofactor is pyridoxal 5'-phosphate.

The catalysed reaction is L-alanine = D-alanine. Its pathway is amino-acid biosynthesis; D-alanine biosynthesis; D-alanine from L-alanine: step 1/1. Its function is as follows. Catalyzes the interconversion of L-alanine and D-alanine. May also act on other amino acids. The chain is Alanine racemase (alr) from Mannheimia succiniciproducens (strain KCTC 0769BP / MBEL55E).